The following is a 210-amino-acid chain: Na(+)-translocating NADH-quinone reductase subunit D (210 aa).

6 helical membrane passes run Ala9–Cys29, Leu42–Ile62, Ile72–Ala92, Ala96–Gly116, Phe131–Ile151, and Met178–Leu198.

The protein belongs to the NqrDE/RnfAE family. As to quaternary structure, composed of six subunits; NqrA, NqrB, NqrC, NqrD, NqrE and NqrF.

Its subcellular location is the cell inner membrane. It carries out the reaction a ubiquinone + n Na(+)(in) + NADH + H(+) = a ubiquinol + n Na(+)(out) + NAD(+). Its function is as follows. NQR complex catalyzes the reduction of ubiquinone-1 to ubiquinol by two successive reactions, coupled with the transport of Na(+) ions from the cytoplasm to the periplasm. NqrA to NqrE are probably involved in the second step, the conversion of ubisemiquinone to ubiquinol. The protein is Na(+)-translocating NADH-quinone reductase subunit D of Pseudoalteromonas translucida (strain TAC 125).